Reading from the N-terminus, the 732-residue chain is Ubiquitin carboxyl-terminal hydrolase 21 (732 aa).

Pro residues predominate over residues 1-10 (MAEFSDPPPS). The tract at residues 1-111 (MAEFSDPPPS…ISPVSNNNHL (111 aa)) is disordered. Polar residues-rich tracts occupy residues 11–31 (NLSSSHKLTKPNQTLDESSPT) and 38–53 (VTNSLSLSSPIRQIQA). Low complexity predominate over residues 55–69 (SPAKPDGSSSSPPDK). Residues 163-469 (AGLYNSGNTC…PAYILFYARE (307 aa)) form the USP domain. Cys172 serves as the catalytic Nucleophile. His428 functions as the Proton acceptor in the catalytic mechanism. The disordered stretch occupies residues 534 to 732 (KEEVFHSAES…SSNMRRSIKL (199 aa)). Over residues 540-551 (SAESSNNEDSSA) the composition is skewed to low complexity. The segment covering 583 to 609 (AYIDKSEKPFAETSQPKEPKPFADRAS) has biased composition (basic and acidic residues). A compositionally biased stretch (basic residues) spans 719–732 (KKKKSSNMRRSIKL).

This sequence belongs to the peptidase C19 family.

It catalyses the reaction Thiol-dependent hydrolysis of ester, thioester, amide, peptide and isopeptide bonds formed by the C-terminal Gly of ubiquitin (a 76-residue protein attached to proteins as an intracellular targeting signal).. Recognizes and hydrolyzes the peptide bond at the C-terminal Gly of ubiquitin. Involved in the processing of poly-ubiquitin precursors as well as that of ubiquitinated proteins. The polypeptide is Ubiquitin carboxyl-terminal hydrolase 21 (UBP21) (Arabidopsis thaliana (Mouse-ear cress)).